Here is a 158-residue protein sequence, read N- to C-terminus: NAD(P)H-quinone oxidoreductase subunit J, chloroplastic (158 aa).

Belongs to the complex I 30 kDa subunit family. As to quaternary structure, NDH is composed of at least 16 different subunits, 5 of which are encoded in the nucleus.

It is found in the plastid. Its subcellular location is the chloroplast thylakoid membrane. It carries out the reaction a plastoquinone + NADH + (n+1) H(+)(in) = a plastoquinol + NAD(+) + n H(+)(out). The catalysed reaction is a plastoquinone + NADPH + (n+1) H(+)(in) = a plastoquinol + NADP(+) + n H(+)(out). NDH shuttles electrons from NAD(P)H:plastoquinone, via FMN and iron-sulfur (Fe-S) centers, to quinones in the photosynthetic chain and possibly in a chloroplast respiratory chain. The immediate electron acceptor for the enzyme in this species is believed to be plastoquinone. Couples the redox reaction to proton translocation, and thus conserves the redox energy in a proton gradient. This is NAD(P)H-quinone oxidoreductase subunit J, chloroplastic from Coffea arabica (Arabian coffee).